Reading from the N-terminus, the 317-residue chain is 17-beta-hydroxysteroid dehydrogenase type 6 (317 aa).

The first 17 residues, 1–17 (MWFYLVTLVGLYYLLRW), serve as a signal peptide directing secretion. Residue 33 to 57 (FITGCDSGFGNLLARQLDRRGMRVL) coordinates NAD(+). Asn-161 carries N-linked (GlcNAc...) asparagine glycosylation. Substrate is bound at residue Ser-164. The active-site Proton acceptor is Tyr-176.

Belongs to the short-chain dehydrogenases/reductases (SDR) family. Detected in prostate, liver and kidney.

It is found in the microsome membrane. It localises to the endoplasmic reticulum membrane. It carries out the reaction all-trans-retinol--[retinol-binding protein] + NAD(+) = all-trans-retinal--[retinol-binding protein] + NADH + H(+). It catalyses the reaction all-trans-retinol + NAD(+) = all-trans-retinal + NADH + H(+). The catalysed reaction is androsterone + NAD(+) = 5alpha-androstan-3,17-dione + NADH + H(+). The enzyme catalyses testosterone + NAD(+) = androst-4-ene-3,17-dione + NADH + H(+). It carries out the reaction 5alpha-androstane-3alpha,17beta-diol + NAD(+) = 17beta-hydroxy-5alpha-androstan-3-one + NADH + H(+). It catalyses the reaction 17beta-estradiol + NAD(+) = estrone + NADH + H(+). The catalysed reaction is 17beta-estradiol + NADP(+) = estrone + NADPH + H(+). The enzyme catalyses 3alpha-hydroxy-5alpha-pregnan-20-one + NAD(+) = 5alpha-pregnane-3,20-dione + NADH + H(+). It carries out the reaction 5alpha-androstane-3beta,17beta-diol + NAD(+) = 17beta-hydroxy-5alpha-androstan-3-one + NADH + H(+). It catalyses the reaction 3beta-hydroxy-5alpha-androstan-17-one + NAD(+) = 5alpha-androstan-3,17-dione + NADH + H(+). With respect to regulation, competitively inhibited by 9-cis-retinoic acid and 13-cis-retinoic acid. NAD-dependent oxidoreductase with broad substrate specificity that shows both oxidative and reductive activity (in vitro). Has retinol dehydrogenase activity towards all-trans-retinol (in vitro). Has 17-beta-hydroxysteroid dehydrogenase activity towards various steroids (in vitro). Converts 5-alpha-androstan-3-alpha,17-beta-diol to androsterone and estradiol to estrone (in vitro). Has 3-alpha-hydroxysteroid dehydrogenase activity towards androsterone (in vitro). This Rattus norvegicus (Rat) protein is 17-beta-hydroxysteroid dehydrogenase type 6 (Hsd17b6).